Here is a 110-residue protein sequence, read N- to C-terminus: UPF0060 membrane protein AHA_2410 (110 aa).

Transmembrane regions (helical) follow at residues 8-28 (GLFL…YLWL), 33-53 (SVWL…LLSL), 63-83 (AAYG…VDGI), and 87-107 (LWDL…MFAP).

The protein belongs to the UPF0060 family.

Its subcellular location is the cell inner membrane. In Aeromonas hydrophila subsp. hydrophila (strain ATCC 7966 / DSM 30187 / BCRC 13018 / CCUG 14551 / JCM 1027 / KCTC 2358 / NCIMB 9240 / NCTC 8049), this protein is UPF0060 membrane protein AHA_2410.